A 103-amino-acid chain; its full sequence is Large ribosomal subunit protein bL21 (103 aa).

The protein belongs to the bacterial ribosomal protein bL21 family. In terms of assembly, part of the 50S ribosomal subunit. Contacts protein L20.

Its function is as follows. This protein binds to 23S rRNA in the presence of protein L20. The polypeptide is Large ribosomal subunit protein bL21 (Pseudomonas syringae pv. tomato (strain ATCC BAA-871 / DC3000)).